Reading from the N-terminus, the 1057-residue chain is Structural maintenance of chromosomes protein 6B (1057 aa).

The Zinc-hook domain maps to 22–1047 (ILRIKVENFM…ISMVKSHERI (1026 aa)). ATP is bound at residue 49–56 (GQNGSGKS). A coiled-coil region spans residues 135-448 (KVSNKRDELR…NDLKKHQTNK (314 aa)). Positions 449–632 (VTAFGGDRVI…PPLSRRPSRL (184 aa)) are flexible hinge. A coiled-coil region spans residues 633–904 (CASFDDQIKD…QDHREKLMAC (272 aa)). The segment covering 818-828 (KNKRKESDQKA) has biased composition (basic and acidic residues). The interval 818-845 (KNKRKESDQKASEICPESEIESLGPWDG) is disordered.

This sequence belongs to the SMC family. SMC6 subfamily. Forms a heterodimer with SMC5. The SMC5-SMC6 complex is composed of the SMC5 and SMC6 heterodimer attached via their hinge domain and from the non-SMC subunit NSE4A or NSE4B. In terms of tissue distribution, expressed in seedlings, rosette leaves and floral buds.

It localises to the nucleus. The protein resides in the chromosome. Core component of the SMC5-SMC6 complex that promotes sister chromatid alignment after DNA damage and facilitates double-stranded DNA breaks (DSBs) repair via homologous recombination between sister chromatids. This Arabidopsis thaliana (Mouse-ear cress) protein is Structural maintenance of chromosomes protein 6B (SMC6B).